We begin with the raw amino-acid sequence, 303 residues long: Aquaporin-7 (303 aa).

Residues 1 to 21 (MAPRSVLETIQSVLQKNMVRE) lie on the Cytoplasmic side of the membrane. Ser-5 carries the phosphoserine modification. The chain crosses the membrane as a helical span at residues 22–39 (FLAEFLSTYVMMVFGLGS). Residues 40–52 (VAHMVLGENSGSY) lie on the Extracellular side of the membrane. Residues 53 to 70 (LGVNLGFGFGVTMGVHVA) traverse the membrane as a helical segment. Topologically, residues 71-74 (GGIS) are cytoplasmic. Positions 75 to 88 (GAHMNAAVTFTNCA) form an intramembrane region, discontinuously helical. Residues 79–81 (NAA) carry the NPA 1 motif. Residues 89-96 (LGRMTWKK) are Cytoplasmic-facing. Residues 97–117 (FPVYVLGQFLGSFSAAATTYL) form a helical membrane-spanning segment. Residues 118-152 (IFYGAINHFAGGDLLVTGSKATANIFATYLPEYMT) lie on the Extracellular side of the membrane. A helical membrane pass occupies residues 153-173 (LWRGFLDEAFVTGMLQLCLFA). The Cytoplasmic segment spans residues 174 to 185 (ITDKKNSPALQG). The chain crosses the membrane as a helical span at residues 186–202 (TEPLVIGILVTVLGVSL). At 203–206 (GMNS) the chain is on the extracellular side. An intramembrane region (discontinuously helical) is located at residues 207 to 220 (GYAINPSRDLPPRL). The short motif at 211-213 (NPS) is the NPA 2 element. The Extracellular segment spans residues 221–238 (FTFIAGWGKQVFRAGNNW). A helical membrane pass occupies residues 239 to 260 (WWVPVVAPLLGAYLGGIVYLGL). The Cytoplasmic segment spans residues 261 to 303 (IHPSIPQDPQRLENFTARDQKVTASYKNAASANISGSVPLEHF).

This sequence belongs to the MIP/aquaporin (TC 1.A.8) family. As to quaternary structure, homotetramer; each monomer provides an independent glycerol/water pore. Two homotetramers on opposing membranes can dimerize, forming a cell-cell junction. Interacts with PLIN1. In terms of processing, phosphorylation by PKA could prevent the interaction with PLIN1. In terms of tissue distribution, detected in proximal tubules in kidney. Detected in the capillary network between muscle fibers in skeletal muscle and heart, and in spermatids and on spermatozoa tails in testis and epididymis. Detected in white and brown adipose tissue, especially on small blood vessels (at protein level). Detected in kidney and white adipose tissue.

It localises to the cell membrane. The protein resides in the cytoplasmic vesicle membrane. It is found in the lipid droplet. It carries out the reaction glycerol(in) = glycerol(out). The catalysed reaction is H2O(in) = H2O(out). The enzyme catalyses urea(in) = urea(out). Glycerol transport is regulated by pH, with the porin being permeable to glycerol at pH 7.4 but not at pH 5.5. Water permeability, however, is not influenced by pH. Aquaglyceroporins form homotetrameric transmembrane channels, with each monomer independently mediating glycerol and water transport across the plasma membrane along their osmotic gradient. Could also be permeable to urea. Mediates the efflux of glycerol, formed upon triglyceride hydrolysis, to avoid its accumulation in adipocytes and to make it available to other tissues. In the kidney, mediates the reabsorption of glycerol, preventing its loss in urine, again participating to energy homeostasis. In pancreatic beta cells, it also mediates the efflux of glycerol, regulating its intracellular levels. This Mus musculus (Mouse) protein is Aquaporin-7.